A 160-amino-acid polypeptide reads, in one-letter code: Putative pre-16S rRNA nuclease (160 aa).

This sequence belongs to the YqgF nuclease family.

It localises to the cytoplasm. Could be a nuclease involved in processing of the 5'-end of pre-16S rRNA. This Rhodopseudomonas palustris (strain ATCC BAA-98 / CGA009) protein is Putative pre-16S rRNA nuclease.